A 92-amino-acid polypeptide reads, in one-letter code: Trp operon repressor homolog (92 aa).

The DNA-binding element occupies 56 to 79; the sequence is QREVASKLGVSITKITRGAANLQD.

The protein belongs to the TrpR family. Homodimer.

It localises to the cytoplasm. Functionally, this protein is an aporepressor. When complexed with L-tryptophan it binds the operator region of the trp operon and prevents the initiation of transcription. This chain is Trp operon repressor homolog, found in Xylella fastidiosa (strain M23).